A 123-amino-acid polypeptide reads, in one-letter code: Small ribosomal subunit protein uS12 (123 aa).

A disordered region spans residues 1 to 32 (MPTINQLVRHGRKRSVKKTNTPALKASPQKRG). Residue Asp-89 is modified to 3-methylthioaspartic acid.

It belongs to the universal ribosomal protein uS12 family. Part of the 30S ribosomal subunit. Contacts proteins S8 and S17. May interact with IF1 in the 30S initiation complex.

Its function is as follows. With S4 and S5 plays an important role in translational accuracy. In terms of biological role, interacts with and stabilizes bases of the 16S rRNA that are involved in tRNA selection in the A site and with the mRNA backbone. Located at the interface of the 30S and 50S subunits, it traverses the body of the 30S subunit contacting proteins on the other side and probably holding the rRNA structure together. The combined cluster of proteins S8, S12 and S17 appears to hold together the shoulder and platform of the 30S subunit. This is Small ribosomal subunit protein uS12 from Desulfatibacillum aliphaticivorans.